The sequence spans 283 residues: Rhomboid-like protease 2 (283 aa).

The span at 1–11 (MANIRTLSDYA) shows a compositional bias: polar residues. The disordered stretch occupies residues 1 to 26 (MANIRTLSDYASSPPRGSSALEGEVG). A run of 3 helical transmembrane segments spans residues 62–82 (IIII…AGLA), 114–134 (ICPL…WVQI), and 149–169 (LLAV…AVLF). Catalysis depends on Ser178, which acts as the Nucleophile. A run of 4 helical transmembrane segments spans residues 179-199 (TAVF…WHAI), 205-225 (AIIS…GSHM), 227-247 (SVGH…LNEN), and 260-280 (LTSQ…IFLV). His230 is a catalytic residue.

It belongs to the peptidase S54 family.

Its subcellular location is the membrane. It carries out the reaction Cleaves type-1 transmembrane domains using a catalytic dyad composed of serine and histidine that are contributed by different transmembrane domains.. Functionally, serine protease involved in intramembrane proteolysis and the subsequent release of polypeptides from their membrane anchors. The polypeptide is Rhomboid-like protease 2 (ROM2) (Toxoplasma gondii).